The chain runs to 202 residues: FMN-dependent NADH:quinone oxidoreductase (202 aa).

Residues serine 10, 16-18 (SHS), and 96-99 (MYNF) each bind FMN.

This sequence belongs to the azoreductase type 1 family. Homodimer. It depends on FMN as a cofactor.

The catalysed reaction is 2 a quinone + NADH + H(+) = 2 a 1,4-benzosemiquinone + NAD(+). It catalyses the reaction N,N-dimethyl-1,4-phenylenediamine + anthranilate + 2 NAD(+) = 2-(4-dimethylaminophenyl)diazenylbenzoate + 2 NADH + 2 H(+). Its function is as follows. Quinone reductase that provides resistance to thiol-specific stress caused by electrophilic quinones. Also exhibits azoreductase activity. Catalyzes the reductive cleavage of the azo bond in aromatic azo compounds to the corresponding amines. The polypeptide is FMN-dependent NADH:quinone oxidoreductase (Hydrogenovibrio crunogenus (strain DSM 25203 / XCL-2) (Thiomicrospira crunogena)).